We begin with the raw amino-acid sequence, 652 residues long: tRNA 5-methylaminomethyl-2-thiouridine biosynthesis bifunctional protein MnmC (652 aa).

The tRNA (mnm(5)s(2)U34)-methyltransferase stretch occupies residues 1 to 235 (MPDRLVPATL…EPALRVGEYA (235 aa)). The tract at residues 259–652 (IGAGLAGCAV…IRALRGRQIG (394 aa)) is FAD-dependent cmnm(5)s(2)U34 oxidoreductase.

It in the N-terminal section; belongs to the methyltransferase superfamily. tRNA (mnm(5)s(2)U34)-methyltransferase family. This sequence in the C-terminal section; belongs to the DAO family. It depends on FAD as a cofactor.

Its subcellular location is the cytoplasm. The catalysed reaction is 5-aminomethyl-2-thiouridine(34) in tRNA + S-adenosyl-L-methionine = 5-methylaminomethyl-2-thiouridine(34) in tRNA + S-adenosyl-L-homocysteine + H(+). Catalyzes the last two steps in the biosynthesis of 5-methylaminomethyl-2-thiouridine (mnm(5)s(2)U) at the wobble position (U34) in tRNA. Catalyzes the FAD-dependent demodification of cmnm(5)s(2)U34 to nm(5)s(2)U34, followed by the transfer of a methyl group from S-adenosyl-L-methionine to nm(5)s(2)U34, to form mnm(5)s(2)U34. The protein is tRNA 5-methylaminomethyl-2-thiouridine biosynthesis bifunctional protein MnmC of Burkholderia ambifaria (strain ATCC BAA-244 / DSM 16087 / CCUG 44356 / LMG 19182 / AMMD) (Burkholderia cepacia (strain AMMD)).